A 1167-amino-acid polypeptide reads, in one-letter code: Pesticidal crystal protein Cry1Ja (1167 aa).

This sequence belongs to the delta endotoxin family.

In terms of biological role, promotes colloidosmotic lysis by binding to the midgut epithelial cells of many lepidopteran larvae. This is Pesticidal crystal protein Cry1Ja (cry1Ja) from Bacillus thuringiensis.